The sequence spans 83 residues: Small ribosomal subunit protein bS16 (83 aa).

It belongs to the bacterial ribosomal protein bS16 family.

This Pseudomonas entomophila (strain L48) protein is Small ribosomal subunit protein bS16.